Reading from the N-terminus, the 602-residue chain is Pro-neuregulin-1, membrane-bound isoform (602 aa).

The Extracellular portion of the chain corresponds to 1–206 (MWATSEGPLQ…MEAEELYQKR (206 aa)). The N-linked (GlcNAc...) asparagine glycan is linked to Asn-21. An Ig-like C2-type domain is found at 29-123 (PKLKEMKNQE…DSTKASVIIT (95 aa)). Cys-49 and Cys-105 are disulfide-bonded. N-linked (GlcNAc...) asparagine glycosylation is found at Asn-113 and Asn-126. An EGF-like domain is found at 137 to 181 (HLTKCDIKQKAFCVNGGECYMVKDLPNPPRYLCRCPNEFTGDRCQ). Cystine bridges form between Cys-141/Cys-155, Cys-149/Cys-169, and Cys-171/Cys-180. A helical transmembrane segment spans residues 207–229 (VLTITGICIALLVVGIMCVVAYC). Residues 230–602 (KTKKQRKKLH…VIANQDPIAV (373 aa)) are Cytoplasmic-facing. Disordered regions lie at residues 293-366 (ETSF…EGNS), 391-421 (MTTPARMSPVDFHTPTSPKSPPSEMSPPVSS), 460-479 (FNSFHNNPTHESNSLPPSPL), and 486-553 (EYET…FLSI). Low complexity predominate over residues 294–314 (TSFSTSHYTSTTHHSMTVTQT). A compositionally biased stretch (polar residues) spans 315-324 (PSHSWSNGHT). A compositionally biased stretch (low complexity) spans 325-341 (ESILSESHSVLVSSSVE). Residues 460 to 474 (FNSFHNNPTHESNSL) show a composition bias toward polar residues. Basic residues predominate over residues 504–514 (TNSRRVKRTKP). Positions 527–536 (DTSSQSTSSE) are enriched in low complexity.

Belongs to the neuregulin family. In terms of processing, proteolytic cleavage close to the plasma membrane on the external face leads to the release of the soluble growth factor form. Extensive glycosylation precedes the proteolytic cleavage.

Its subcellular location is the cell membrane. The protein resides in the secreted. In terms of biological role, direct ligand for the ERBB tyrosine kinase receptors. The multiple isoforms perform diverse functions: cysteine-rich domain containing isoforms (isoform 2-isoform 4) probably regulate the expression of nicotinic acetylcholine receptors at developing interneuronal synapses. Isoform Ig-NRG is required for the initial induction and/or maintenance of the mature levels of acetylcholine receptors at neuromuscular synapses. Binds to ERBB3 and integrins to form a complex which is essential for NRG1-ERBB signaling. The sequence is that of Pro-neuregulin-1, membrane-bound isoform (NRG1) from Gallus gallus (Chicken).